The primary structure comprises 107 residues: Integration host factor subunit beta (107 aa).

The tract at residues 76 to 107 is disordered; that stretch reads FVPHFKPGKELRERVDGRAGEPLKADDPDDER. Residues 82 to 101 are compositionally biased toward basic and acidic residues; that stretch reads PGKELRERVDGRAGEPLKAD.

Belongs to the bacterial histone-like protein family. In terms of assembly, heterodimer of an alpha and a beta chain.

Functionally, this protein is one of the two subunits of integration host factor, a specific DNA-binding protein that functions in genetic recombination as well as in transcriptional and translational control. This is Integration host factor subunit beta from Burkholderia cenocepacia (strain ATCC BAA-245 / DSM 16553 / LMG 16656 / NCTC 13227 / J2315 / CF5610) (Burkholderia cepacia (strain J2315)).